Consider the following 121-residue polypeptide: Mediator of RNA polymerase II transcription subunit 22 (121 aa).

Belongs to the Mediator complex subunit 22 family. In terms of assembly, component of the Mediator complex.

It is found in the nucleus. Functionally, component of the Mediator complex, a coactivator involved in the regulated transcription of nearly all RNA polymerase II-dependent genes. Mediator functions as a bridge to convey information from gene-specific regulatory proteins to the basal RNA polymerase II transcription machinery. Mediator is recruited to promoters by direct interactions with regulatory proteins and serves as a scaffold for the assembly of a functional preinitiation complex with RNA polymerase II and the general transcription factors. The polypeptide is Mediator of RNA polymerase II transcription subunit 22 (SRB6) (Eremothecium gossypii (strain ATCC 10895 / CBS 109.51 / FGSC 9923 / NRRL Y-1056) (Yeast)).